The chain runs to 244 residues: 3-deoxy-manno-octulosonate cytidylyltransferase (244 aa).

It belongs to the KdsB family.

It is found in the cytoplasm. The catalysed reaction is 3-deoxy-alpha-D-manno-oct-2-ulosonate + CTP = CMP-3-deoxy-beta-D-manno-octulosonate + diphosphate. It participates in nucleotide-sugar biosynthesis; CMP-3-deoxy-D-manno-octulosonate biosynthesis; CMP-3-deoxy-D-manno-octulosonate from 3-deoxy-D-manno-octulosonate and CTP: step 1/1. Its pathway is bacterial outer membrane biogenesis; lipopolysaccharide biosynthesis. In terms of biological role, activates KDO (a required 8-carbon sugar) for incorporation into bacterial lipopolysaccharide in Gram-negative bacteria. The polypeptide is 3-deoxy-manno-octulosonate cytidylyltransferase (Rickettsia canadensis (strain McKiel)).